Reading from the N-terminus, the 140-residue chain is Peptidyl-prolyl cis-trans isomerase FKBP2 (140 aa).

The signal sequence occupies residues 1–22; that stretch reads MRLSWILTILSICLSALAAATG. Residues 47-135 form the PPIase FKBP-type domain; the sequence is GDVLHMHYTG…VFEVELLKIE (89 aa). Positions 137–140 match the Prevents secretion from ER motif; that stretch reads RSEL.

The protein belongs to the FKBP-type PPIase family. FKBP2 subfamily. In terms of assembly, interacts with ARFGEF1/BIG1 and the C-terminal of EPB41L2.

The protein resides in the endoplasmic reticulum membrane. The catalysed reaction is [protein]-peptidylproline (omega=180) = [protein]-peptidylproline (omega=0). With respect to regulation, inhibited by both FK506 and rapamycin. In terms of biological role, PPIases accelerate the folding of proteins. It catalyzes the cis-trans isomerization of proline imidic peptide bonds in oligopeptides. This Mus musculus (Mouse) protein is Peptidyl-prolyl cis-trans isomerase FKBP2 (Fkbp2).